The following is a 493-amino-acid chain: Glutathione hydrolase 6 (493 aa).

Residues 1 to 54 (MERAEEPVVYQKLLPWEPSLESEEEVEEEETSEALVLNPRRHQDSSRNKAGGLP) lie on the Cytoplasmic side of the membrane. The tract at residues 19–52 (SLESEEEVEEEETSEALVLNPRRHQDSSRNKAGG) is disordered. Over residues 20 to 32 (LESEEEVEEEETS) the composition is skewed to acidic residues. A helical; Signal-anchor for type II membrane protein membrane pass occupies residues 55–75 (GTWARVVAALLLLAVGCSLAV). Residues 76 to 493 (RQLQNQGRST…PHACCPFQGF (418 aa)) lie on the Extracellular side of the membrane. The interval 83-105 (RSTGSLGSVAPPPGGHSHGPGVY) is disordered. N-linked (GlcNAc...) asparagine glycosylation is found at Asn-161 and Asn-370. Residues 442 to 455 (PPTQAQHQHQGQQE) show a composition bias toward low complexity. Residues 442–464 (PPTQAQHQHQGQQEPTEHPSTCG) are disordered.

Belongs to the gamma-glutamyltransferase family. In terms of assembly, heterodimer composed of the light and heavy chains. The active site is located in the light chain. Post-translationally, cleaved by autocatalysis into a large and a small subunit and the autocatalytic cleavage is essential to the functional activation of the enzyme.

It is found in the membrane. It catalyses the reaction an N-terminal (5-L-glutamyl)-[peptide] + an alpha-amino acid = 5-L-glutamyl amino acid + an N-terminal L-alpha-aminoacyl-[peptide]. The catalysed reaction is glutathione + H2O = L-cysteinylglycine + L-glutamate. It carries out the reaction an S-substituted glutathione + H2O = an S-substituted L-cysteinylglycine + L-glutamate. It functions in the pathway sulfur metabolism; glutathione metabolism. Hydrolyzes and transfers gamma-glutamyl moieties from glutathione and other gamma-glutamyl compounds to acceptors. This is Glutathione hydrolase 6 from Homo sapiens (Human).